Reading from the N-terminus, the 197-residue chain is FMN-dependent NADH:quinone oxidoreductase (197 aa).

Residues serine 10, 16–18, 93–96, and 137–140 each bind FMN; these read SQS, MYNF, and TRGG.

The protein belongs to the azoreductase type 1 family. In terms of assembly, homodimer. FMN serves as cofactor.

It carries out the reaction 2 a quinone + NADH + H(+) = 2 a 1,4-benzosemiquinone + NAD(+). The enzyme catalyses N,N-dimethyl-1,4-phenylenediamine + anthranilate + 2 NAD(+) = 2-(4-dimethylaminophenyl)diazenylbenzoate + 2 NADH + 2 H(+). Functionally, quinone reductase that provides resistance to thiol-specific stress caused by electrophilic quinones. Also exhibits azoreductase activity. Catalyzes the reductive cleavage of the azo bond in aromatic azo compounds to the corresponding amines. The protein is FMN-dependent NADH:quinone oxidoreductase of Shewanella frigidimarina (strain NCIMB 400).